The chain runs to 1125 residues: ATP-dependent DNA helicase Hel308 (1125 aa).

The Q motif signature appears at methionine 1 to alanine 29. ATP contacts are provided by residues glutamine 28 and isoleucine 46 to threonine 53. A Helicase ATP-binding domain is found at lysine 33 to aspartate 197. Residues aspartate 145–histidine 148 carry the DEAH box motif. The 215-residue stretch at asparagine 226–threonine 440 folds into the Helicase C-terminal domain. Residues leucine 500–tyrosine 640 enclose the DOD-type homing endonuclease domain.

This sequence belongs to the helicase family. Hel308 subfamily. As to quaternary structure, monomer. This protein undergoes a protein self splicing that involves a post-translational excision of the intervening region (intein) followed by peptide ligation.

It catalyses the reaction Couples ATP hydrolysis with the unwinding of duplex DNA by translocating in the 3'-5' direction.. It carries out the reaction ATP + H2O = ADP + phosphate + H(+). In terms of biological role, DNA-dependent ATPase and 3'-5' DNA helicase that may be involved in repair of stalled replication forks. This Thermococcus kodakarensis (strain ATCC BAA-918 / JCM 12380 / KOD1) (Pyrococcus kodakaraensis (strain KOD1)) protein is ATP-dependent DNA helicase Hel308.